Reading from the N-terminus, the 507-residue chain is Putative UDP-glucuronosyltransferase ugt-60 (507 aa).

A signal peptide spans methionine 1–serine 15. N-linked (GlcNAc...) asparagine glycosylation occurs at asparagine 312. A helical membrane pass occupies residues tyrosine 379–alanine 399.

The protein belongs to the UDP-glycosyltransferase family.

The protein localises to the membrane. The enzyme catalyses glucuronate acceptor + UDP-alpha-D-glucuronate = acceptor beta-D-glucuronoside + UDP + H(+). In Caenorhabditis elegans, this protein is Putative UDP-glucuronosyltransferase ugt-60 (ugt-60).